Reading from the N-terminus, the 838-residue chain is Phosphatidylethanolamine N-methyltransferase 1 (838 aa).

Residues 1–48 (MATEIITEKKEIVARTRSSGITFNPPVTHDMVRSLFDPTIKKSFLECC) are Lumenal-facing. The helical transmembrane segment at 49 to 69 (ITLTILANFVLCYYLINWFGL) threads the bilayer. The Cytoplasmic segment spans residues 70 to 73 (SQAK). A helical membrane pass occupies residues 74–94 (LIFLIQYVYWRLAYNLGIGII). Over 95–157 (LHYQSHYESL…ELNCWLLFRQ (63 aa)) the chain is Lumenal. Residues 158–178 (FVDLILMQDFTTYIIYVYLSL) form a helical membrane-spanning segment. Over 179 to 184 (PTDVSS) the chain is Cytoplasmic. The helical transmembrane segment at 185–205 (LINWKSLIGIAMILFNIWVKI) threads the bilayer. The Lumenal segment spans residues 206–236 (DAHRVVKDYAWYWGDFFFLQDAELTFDGVFN). A helical transmembrane segment spans residues 237–257 (ISPHPMYSIGYLGYYGLSLIC). The Cytoplasmic portion of the chain corresponds to 258 to 261 (GDYR). The helical transmembrane segment at 262–282 (VLLVSVGGHFLQFLFLKYVES) threads the bilayer. The Lumenal segment spans residues 283–328 (PHIERTYGSDSPSNSTQHQIDDLIAKENYDYSRPLINTGILFENFQ). The chain crosses the membrane as a helical span at residues 329-349 (FLRFSDYFTVSTILVLFSWFF). Topologically, residues 350 to 356 (TSKPSNN) are cytoplasmic. A helical membrane pass occupies residues 357–377 (FLFVLTLLTKLTTWLLTSWIL). The Lumenal segment spans residues 378 to 403 (FQQSNRKWFTRLFLKNGYTQIYSYQQ). Residues 404–424 (WQFLYNYSLIVTNTLLFLHTL) form a helical membrane-spanning segment. Residues 425 to 435 (SELYSIQSSDG) lie on the Cytoplasmic side of the membrane. The helical transmembrane segment at 436-456 (LNNSHVIFGLLLCAIQIWCNV) threads the bilayer. Topologically, residues 457–517 (ETRDAISDFG…VLMTNFSKTN (61 aa)) are lumenal. Residues 518–538 (VTLAVLWTVTNLIFVKLIEEP) traverse the membrane as a helical segment. Residues 539–838 (HVSKVYGNGT…DIKEVLDSLN (300 aa)) are Cytoplasmic-facing.

It belongs to the class VI-like SAM-binding methyltransferase superfamily. CHO2 family.

It localises to the endoplasmic reticulum membrane. The catalysed reaction is a 1,2-diacyl-sn-glycero-3-phosphoethanolamine + S-adenosyl-L-methionine = a 1,2-diacyl-sn-glycero-3-phospho-N-methylethanolamine + S-adenosyl-L-homocysteine + H(+). It functions in the pathway phospholipid metabolism; phosphatidylcholine biosynthesis. In terms of biological role, catalyzes the first step of the methylation pathway of phosphatidylcholine biosynthesis, the SAM-dependent methylation of phosphatidylethanolamine (PE) to phosphatidylmonomethylethanolamine (PMME). This chain is Phosphatidylethanolamine N-methyltransferase 1 (CHO2-1), found in Vanderwaltozyma polyspora (strain ATCC 22028 / DSM 70294 / BCRC 21397 / CBS 2163 / NBRC 10782 / NRRL Y-8283 / UCD 57-17) (Kluyveromyces polysporus).